A 136-amino-acid polypeptide reads, in one-letter code: Probable S-adenosyl-L-methionine-binding protein PH1056 (136 aa).

In terms of domain architecture, TsaA-like spans 8-126 (IVPVGYIRKE…FPERYDCPKE (119 aa)). S-adenosyl-L-methionine-binding positions include 48–49 (HK), arginine 78, and 106–109 (EDGT).

Belongs to the tRNA methyltransferase O family.

In Pyrococcus horikoshii (strain ATCC 700860 / DSM 12428 / JCM 9974 / NBRC 100139 / OT-3), this protein is Probable S-adenosyl-L-methionine-binding protein PH1056.